The chain runs to 674 residues: Protein asunder (674 aa).

A coiled-coil region spans residues 516–538 (HKAKDQYRLLYRELEQLIQLNAS). Residues 560–579 (PSKSEAGTANLRSFTESPLS) are disordered. Residues 564–577 (EAGTANLRSFTESP) are compositionally biased toward polar residues. The Nuclear localization signal (NLS) motif lies at 601–607 (LKASKRR).

This sequence belongs to the Integrator subunit 13 family. As to quaternary structure, belongs to the multiprotein complex Integrator, at least composed of IntS1, IntS2, IntS3, IntS4, omd/IntS5, IntS6, defl/IntS7, IntS8, IntS9, IntS10, IntS11, IntS12, asun/IntS13, IntS14 and IntS15. The core complex associates with protein phosphatase 2A subunits mts/PP2A and Pp2A-29B, to form the Integrator-PP2A (INTAC) complex. In terms of processing, phosphorylated.

The protein localises to the nucleus. Its subcellular location is the cytoplasm. It is found in the perinuclear region. Functionally, component of the integrator complex, a multiprotein complex that terminates RNA polymerase II (Pol II) transcription in the promoter-proximal region of genes. The integrator complex provides a quality checkpoint during transcription elongation by driving premature transcription termination of transcripts that are unfavorably configured for transcriptional elongation: the complex terminates transcription by (1) catalyzing dephosphorylation of the C-terminal domain (CTD) of Pol II subunit Polr2A/Rbp1 and Spt5, and (2) degrading the exiting nascent RNA transcript via endonuclease activity. The integrator complex is also involved in the 3'-end processing of the U7 snRNA, and also the spliceosomal snRNAs U1, U2, U4 and U5. The protein is Protein asunder (asun) of Drosophila pseudoobscura pseudoobscura (Fruit fly).